Here is a 617-residue protein sequence, read N- to C-terminus: Sodium-dependent noradrenaline transporter (617 aa).

Residues 1–23 form a disordered region; sequence MLLARMNPQVQPENNGADTGPEQ. Residues 1–62 are Cytoplasmic-facing; sequence MLLARMNPQV…AQPRETWGKK (62 aa). Over residues 8–17 the composition is skewed to polar residues; sequence PQVQPENNGA. Residues 63-88 form a helical membrane-spanning segment; sequence IDFLLSVVGFAVDLANVWRFPYLCYK. The Na(+) site is built by G71, A73, and V74. D75 contacts (R)-noradrenaline. Residue D75 participates in dopamine binding. N78 is a binding site for Na(+). The (R)-noradrenaline site is built by Y87 and K88. The Extracellular segment spans residues 89 to 92; sequence NGGG. The helical transmembrane segment at 93–116 threads the bilayer; it reads AFLIPYTLFLIIAGMPLFYMELAL. Over 117–135 the chain is Cytoplasmic; that stretch reads GQYNREGAATVWKICPFFK. Residues 136 to 166 form a helical membrane-spanning segment; sequence GVGYAVILIALYVGFYYNVIIAWSLYYLFSS. Residues A145 and G149 each coordinate (R)-noradrenaline. Dopamine is bound at residue A145. Over 167–233 the chain is Extracellular; it reads FTLNLPWTDC…SSGIHDIGLP (67 aa). C176 and C185 form a disulfide bridge. N-linked (GlcNAc...) asparagine glycosylation is found at N184, N192, and N198. The helical transmembrane segment at 234 to 254 threads the bilayer; it reads QWQLLLCLMVVVIVLYFSLWK. Over 255-257 the chain is Cytoplasmic; the sequence is GVK. Residues 258-282 traverse the membrane as a helical segment; the sequence is TSGKVVWITATLPYFVLFVLLVHGV. At 283 to 306 the chain is on the extracellular side; the sequence is TLPGASNGINAYLHIDFYRLKEAT. The chain crosses the membrane as a helical span at residues 307–332; the sequence is VWIDAATQIFFSLGAGFGVLIAFASY. Residue F317 coordinates (R)-noradrenaline. F317 is a binding site for dopamine. Na(+) is bound at residue S318. Over 333 to 338 the chain is Cytoplasmic; the sequence is NKFDNN. The chain crosses the membrane as a helical span at residues 339–362; sequence CYRDALLTSSINCITSFVSGFAIF. N350 contacts Na(+). The Extracellular portion of the chain corresponds to 363-402; that stretch reads SILGYMAHEHKVNIEDVATEGAGLVFILYPEAISTLSGST. Residue E382 coordinates (R)-noradrenaline. Dopamine is bound at residue E382. Residues 403 to 428 form a helical membrane-spanning segment; sequence FWAVVFFVMLLALGLDSSMGGMEAVI. Na(+)-binding residues include D418 and S419. Over 429-443 the chain is Cytoplasmic; sequence TGLADDFQVLKRHRK. A helical transmembrane segment spans residues 444–464; it reads LFTFGVTFSTFLLALFCITKG. G465 is a topological domain (extracellular). A helical transmembrane segment spans residues 466–492; sequence IYVLTLLDTFAAGTSILFAVLMEAIGV. At 493-522 the chain is on the cytoplasmic side; the sequence is SWFYGVDRFSNDIQQMMGFRPGLYWRLCWK. The chain crosses the membrane as a helical span at residues 523–545; that stretch reads FVSPAFLLFVVVVSIINFKPLTY. At 546 to 548 the chain is on the extracellular side; the sequence is DDY. A helical transmembrane segment spans residues 549 to 569; sequence IFPPWANWVGWGIALSSMVLV. At 570–617 the chain is on the cytoplasmic side; the sequence is PIYVIYKFLSTQGSLWERLAYGITPENEHHLVAQRDIRQFQLQHWLAI.

It belongs to the sodium:neurotransmitter symporter (SNF) (TC 2.A.22) family. SLC6A2 subfamily. In terms of assembly, monomer. Can form homodimers in the cell membrane; homodimerization is mostly mediated by cholesterol and lipids, and regulates neurotransmitter transport activity. Interacts with PRKCABP. Palmitoylated; palmitoylation regulates protein levels and neurotransmitter transport.

The protein localises to the cell membrane. The protein resides in the cell projection. It is found in the axon. Its subcellular location is the synapse. It localises to the synaptosome. It catalyses the reaction (R)-noradrenaline(out) + chloride(out) + Na(+)(out) = (R)-noradrenaline(in) + chloride(in) + Na(+)(in). It carries out the reaction dopamine(out) + chloride(out) + Na(+)(out) = dopamine(in) + chloride(in) + Na(+)(in). The enzyme catalyses dopamine(out) + chloride(out) + 2 Na(+)(out) = dopamine(in) + chloride(in) + 2 Na(+)(in). With respect to regulation, inhibited by mazindol, desipramine, nomifensine and nortriptyline. Mediates sodium- and chloride-dependent transport of norepinephrine (also known as noradrenaline), the primary signaling neurotransmitter in the autonomic sympathetic nervous system. Is responsible for norepinephrine re-uptake and clearance from the synaptic cleft, thus playing a crucial role in norepinephrine inactivation and homeostasis. Can also mediate sodium- and chloride-dependent transport of dopamine. The sequence is that of Sodium-dependent noradrenaline transporter from Homo sapiens (Human).